A 595-amino-acid polypeptide reads, in one-letter code: P2X purinoceptor 7 (595 aa).

Residues 1-22 lie on the Cytoplasmic side of the membrane; the sequence is MPACCSWNDVLQYETNKVTRIQ. The S-palmitoyl cysteine moiety is linked to residue Cys4. A helical membrane pass occupies residues 23-46; that stretch reads STNYGTVKWVLHMIVFSYISFALV. The Extracellular segment spans residues 47 to 328; the sequence is SDKLYQRKEP…ILVFGTGGKF (282 aa). A glycan (N-linked (GlcNAc...) asparagine) is linked at Asn74. Disulfide bonds link Cys119/Cys168, Cys129/Cys152, and Cys135/Cys162. Arg125 and Arg133 each carry ADP-ribosylarginine; by ART2B. A glycan (N-linked (GlcNAc...) asparagine) is linked at Asn187. Position 189 (Thr189) interacts with ATP. Asn202 and Asn213 each carry an N-linked (GlcNAc...) asparagine glycan. A disulfide bond links Cys216 and Cys226. Asn241 carries N-linked (GlcNAc...) asparagine glycosylation. Cys260 and Cys269 form a disulfide bridge. ATP contacts are provided by Arg294 and Lys311. Residues 329-353 traverse the membrane as a helical segment; it reads DIIQLVVYIGSTLSYFGLATVCIDL. Ser342 contributes to the Na(+) binding site. At 354–595 the chain is on the cytoplasmic side; the sequence is LINTYSSAFC…GQYSGFKYPY (242 aa). Residues 360–377 are C-cys anchor; the sequence is SAFCRSGVYPYCKCCEPC. Residues Cys363, Cys374, and Cys377 are each lipidated (S-palmitoyl cysteine). Ser390 is modified (phosphoserine). Residues 395-595 form a cytoplasmic ballast region; that stretch reads KPTLKYVSFV…GQYSGFKYPY (201 aa). 3 residues coordinate Zn(2+): Cys479, Cys499, and Cys506. 4 residues coordinate GTP: Arg546, His547, Tyr550, and Ala567. Cys572 contributes to the Zn(2+) binding site. GTP is bound by residues Lys583, Ser589, and Gly590.

The protein belongs to the P2X receptor family. As to quaternary structure, homotrimers. Interacts with LAMA3, ITGB2, ACTB, ACTN4, SVIL, MPP3, HSPA1, HSPCB, HSPA8, PIK230 and PTPRB. Interacts (via C-terminus) with EMP2. Phosphorylation results in its inactivation. In terms of processing, ADP-ribosylation at Arg-125 is necessary and sufficient to activate P2RX7 and gate the channel. Post-translationally, palmitoylation of several cysteines in the C-terminal cytoplasmic tail is required for efficient localization to cell surface. Palmitoylation prevents channel desensitization by physically anchoring the palmitoylated groups to the membrane.

The protein resides in the cell membrane. It carries out the reaction Ca(2+)(in) = Ca(2+)(out). The enzyme catalyses K(+)(in) = K(+)(out). The catalysed reaction is Na(+)(in) = Na(+)(out). Its activity is regulated as follows. Activated by high extracellular ATP levels (0.1-2.5 mM). The synthetic analog 2'(3')-O-(4-benzoylbenzoyl)ATP (BzATP) acts as a potent agonist. Does not undergo desensitization, instead, undergoes a facilitation process where currents progressively increase with repetitive or prolonged agonist application. Palmitoylation prevents channel desensitization. The permeability of the P2RX7 channel is modulated by the amount of cholesterol in the plasma membrane. Its function is as follows. ATP-gated nonselective transmembrane cation channel. Requires high millimolar-range concentrations of ATP to become activated. ATP binding trigers the rapid opening of the channel and allows Na(+) and Ca(2+) influx and K(+) efflux. Has also the ability to form a large pore in the cell membrane, allowing the passage of large cationic molecules. In microglia, may mediate NADPH transport across the plasma membrane. In immune cells, P2RX7 acts as a molecular sensor in pathological inflammatory states by detecting and responding to high local concentrations of extracellar ATP. In microglial cells, P2RX7 activation leads to the release of pro-inflammatory cytokines, such as IL-1beta and IL-18, through the activation of the NLRP3 inflammasome and caspase-1. Cooperates with KCNK6 to activate NLRP3 inflammasome. Activates death pathways leading to apoptosis and autophagy. Activates death pathways leading to pyroptosis. The chain is P2X purinoceptor 7 (P2rx7) from Mus musculus (Mouse).